The primary structure comprises 298 residues: Serpentine receptor class delta-34 (298 aa).

The next 6 membrane-spanning stretches (helical) occupy residues 10 to 30 (SSIM…FTQV), 54 to 74 (ACFF…FAIP), 99 to 119 (MILL…VITY), 158 to 178 (LATN…IVFI), 207 to 227 (LTIQ…AHLI), and 242 to 262 (VLYM…IVTI).

This sequence belongs to the nematode receptor-like protein srd family.

The protein resides in the membrane. This Caenorhabditis elegans protein is Serpentine receptor class delta-34 (srd-34).